The primary structure comprises 110 residues: Glutaredoxin-1 (110 aa).

The Glutaredoxin domain occupies 7–110; sequence IKHVKDLIAE…EELLEPILAN (104 aa). A Glycyl lysine isopeptide (Lys-Gly) (interchain with G-Cter in ubiquitin) cross-link involves residue Lys11. Residues 24–29, Gln63, Val75, and 88–89 contribute to the glutathione site; these read KTYCPY and ND. Cys27 is modified (S-glutathionyl cysteine; alternate). Cysteines 27 and 30 form a disulfide.

It belongs to the glutaredoxin family.

Its subcellular location is the cytoplasm. The protein resides in the nucleus. It carries out the reaction 2 glutathione + H2O2 = glutathione disulfide + 2 H2O. The enzyme catalyses 1-chloro-2,4-dinitrobenzene + glutathione = 2,4-dinitrophenyl-S-glutathione + chloride + H(+). It catalyses the reaction RX + glutathione = an S-substituted glutathione + a halide anion + H(+). Its function is as follows. Component of the glutathione system which performs several activities such as glutathione-dependent oxidoreductase, glutathione peroxidase and glutathione S-transferase (GST) activity. The disulfide bond functions as an electron carrier in the glutathione-dependent synthesis of deoxyribonucleotides by the enzyme ribonucleotide reductase. In addition, it is also involved in reducing cytosolic protein- and non-protein-disulfides in a coupled system with glutathione reductase. Required for resistance to reactive oxygen species (ROS) by directly reducing hydroperoxides and for the detoxification of ROS-mediated damage. GRX1 is less active as an oxidoreductase than GRX2. This chain is Glutaredoxin-1 (GRX1), found in Saccharomyces cerevisiae (strain ATCC 204508 / S288c) (Baker's yeast).